The chain runs to 317 residues: Probable RuBisCO transcriptional regulator (317 aa).

In terms of domain architecture, HTH lysR-type spans 6–63 (FTLDQLRILKAIAKEGSFKKAANSLYVSQPAISLQIQNLERQLNVALFERGNKKATLT). The H-T-H motif DNA-binding region spans 23 to 42 (FKKAANSLYVSQPAISLQIQ).

It belongs to the LysR transcriptional regulatory family.

The protein localises to the plastid. Its subcellular location is the chloroplast. Functionally, trans-acting transcriptional regulator of RuBisCO genes (rbcL and rbcS) expression. The polypeptide is Probable RuBisCO transcriptional regulator (rbcR) (Porphyra purpurea (Red seaweed)).